The sequence spans 320 residues: tRNA dimethylallyltransferase (320 aa).

16–23 (GPTASGKT) is a binding site for ATP. 18 to 23 (TASGKT) is a substrate binding site. Interaction with substrate tRNA regions lie at residues 41 to 44 (DSAL), 165 to 169 (QRIQR), and 247 to 252 (RCVGYR).

The protein belongs to the IPP transferase family. Monomer. Requires Mg(2+) as cofactor.

It carries out the reaction adenosine(37) in tRNA + dimethylallyl diphosphate = N(6)-dimethylallyladenosine(37) in tRNA + diphosphate. Catalyzes the transfer of a dimethylallyl group onto the adenine at position 37 in tRNAs that read codons beginning with uridine, leading to the formation of N6-(dimethylallyl)adenosine (i(6)A). This chain is tRNA dimethylallyltransferase, found in Azoarcus sp. (strain BH72).